The following is a 1000-amino-acid chain: Chromosome transmission fidelity protein 18 homolog (1000 aa).

Disordered regions lie at residues 53 to 89, 130 to 159, and 272 to 301; these read SAGD…RDAS, AGNS…DSKF, and EFGE…SHSL. Residues 60 to 70 show a composition bias toward polar residues; it reads SNANSKPTGDS. The span at 272 to 295 shows a compositional bias: acidic residues; that stretch reads EFGENDSEILENDDNAGEEDDEDE. 396-403 provides a ligand contact to ATP; sequence GPPGLGKT. A compositionally biased stretch (polar residues) spans 888–898; it reads ARNAGRDNTTA. Positions 888–916 are disordered; that stretch reads ARNAGRDNTTAAAAVKTADPKGAKSAAKP.

It belongs to the activator 1 small subunits family. CTF18 subfamily. In terms of assembly, component of the CTF18-RFC complex, which consists of ctf18, ctf8, dcc1, rfc2, rfc3, rfc4 and rfc5. The CTF18-RFC complex associates with pcna.

It is found in the nucleus. Functionally, chromosome cohesion factor involved in sister chromatid cohesion and fidelity of chromosome transmission. Component of one of the cell nuclear antigen loader complexes, CTF18-replication factor C (CTF18-RFC), which consists of ctf18, ctf8, dcc1, rfc2, rfc3, rfc4 and rfc5. The CTF18-RFC complex binds to single-stranded and primed DNAs and has weak ATPase activity that is stimulated by the presence of primed DNA, replication protein A (RPA) and by proliferating cell nuclear antigen (pcna). The CTF18-RFC complex catalyzes the ATP-dependent loading of pcna onto primed and gapped DNA. The polypeptide is Chromosome transmission fidelity protein 18 homolog (chtf18) (Xenopus laevis (African clawed frog)).